The following is a 521-amino-acid chain: Ribonuclease Y (521 aa).

Residues 5-25 (LLLILTAVIMLIVGFAVGAIL) form a helical membrane-spanning segment. Residues 77–107 (ELKDRRGEVQKQENRLIQREETMDRKDATLD) form a disordered region. The 61-residue stretch at 211-271 (TVTVVTLPND…IRREIARMTL (61 aa)) folds into the KH domain. An HD domain is found at 337-430 (VLNHSIEVAK…VAASDAISAA (94 aa)).

The protein belongs to the RNase Y family.

It is found in the cell membrane. Its function is as follows. Endoribonuclease that initiates mRNA decay. The protein is Ribonuclease Y of Latilactobacillus sakei subsp. sakei (strain 23K) (Lactobacillus sakei subsp. sakei).